Reading from the N-terminus, the 302-residue chain is Tetrahydromethanopterin S-methyltransferase subunit E (302 aa).

Transmembrane regions (helical) follow at residues P3–S23, P86–V106, I132–L152, V155–G175, P233–F253, and L259–W279.

Belongs to the MtrE family. As to quaternary structure, the complex is composed of 8 subunits; MtrA, MtrB, MtrC, MtrD, MtrE, MtrF, MtrG and MtrH.

The protein resides in the cell membrane. It catalyses the reaction 5-methyl-5,6,7,8-tetrahydromethanopterin + coenzyme M + 2 Na(+)(in) = 5,6,7,8-tetrahydromethanopterin + methyl-coenzyme M + 2 Na(+)(out). Its pathway is one-carbon metabolism; methanogenesis from CO(2); methyl-coenzyme M from 5,10-methylene-5,6,7,8-tetrahydromethanopterin: step 2/2. Part of a complex that catalyzes the formation of methyl-coenzyme M and tetrahydromethanopterin from coenzyme M and methyl-tetrahydromethanopterin. This is an energy-conserving, sodium-ion translocating step. The chain is Tetrahydromethanopterin S-methyltransferase subunit E from Methanosarcina barkeri (strain Fusaro / DSM 804).